Consider the following 214-residue polypeptide: Probable transaldolase (214 aa).

Lys-83 acts as the Schiff-base intermediate with substrate in catalysis.

The protein belongs to the transaldolase family. Type 3B subfamily.

It localises to the cytoplasm. It catalyses the reaction D-sedoheptulose 7-phosphate + D-glyceraldehyde 3-phosphate = D-erythrose 4-phosphate + beta-D-fructose 6-phosphate. Its pathway is carbohydrate degradation; pentose phosphate pathway; D-glyceraldehyde 3-phosphate and beta-D-fructose 6-phosphate from D-ribose 5-phosphate and D-xylulose 5-phosphate (non-oxidative stage): step 2/3. Functionally, transaldolase is important for the balance of metabolites in the pentose-phosphate pathway. The polypeptide is Probable transaldolase (Thermodesulfovibrio yellowstonii (strain ATCC 51303 / DSM 11347 / YP87)).